We begin with the raw amino-acid sequence, 583 residues long: MSINTDESTWRTFKRLWTFIRLYKSGLAVAVVALIINAVSDTYMVSLLKPLLDEGFGSAESDFLRTLPLLVFGLMFIRGISSFVSTYCLSWVSGNVVMQVRRMVFNHYMQMPVSYFDKEKSGSLLSRITYDSEQVSAATSQALVSIVREGTSIIGLLVLMFYNSWQLSLVLILVAPVVAWAIGFVSKRFRKISKNMQTTMGIVTSSAEQMLKGHKVVLSYGGQEVEKSRFDVVSNQMRQQSMKLITAQAAANPIIQMIASIAIVVVLYLASVDTIKDQLTPGTFTVVFSAMFGLMRPLKALTNVTSQFQRGMAAAQTLFALVDLEPEKNTGTYSVERAKGEVNVKDISFTYEGAEKPALSHVSFDIPRGKTVALVGRSGSGKSTIANLFTRFYDVDSGEIQLDGVDVRDYELKNLRTQFALVSQNVHLFNDTIANNIAYAAGDKYSREDIERAAELAHAMEFISKMENGLDTVVGENGASLSGGQRQRVAIARALLRDAPVLILDEATSALDTESERAIQSALDELQKNKTVLVIAHRLSTIEKADQILVIDDGAVVERGSHSELIEKDGAYAQLHRIQFGEG.

5 consecutive transmembrane segments (helical) span residues 27 to 47 (LAVA…MVSL), 69 to 89 (LLVF…TYCL), 142 to 162 (ALVS…LMFY), 165 to 185 (WQLS…IGFV), and 249 to 269 (AAAN…VLYL). The ABC transmembrane type-1 domain occupies 28 to 310 (AVAVVALIIN…LTNVTSQFQR (283 aa)). The 237-residue stretch at 342 to 578 (VNVKDISFTY…DGAYAQLHRI (237 aa)) folds into the ABC transporter domain. 376-383 (GRSGSGKS) is a binding site for ATP.

This sequence belongs to the ABC transporter superfamily. Lipid exporter (TC 3.A.1.106) family. In terms of assembly, homodimer.

The protein resides in the cell inner membrane. The catalysed reaction is ATP + H2O + lipid A-core oligosaccharideSide 1 = ADP + phosphate + lipid A-core oligosaccharideSide 2.. Involved in lipopolysaccharide (LPS) biosynthesis. Translocates lipid A-core from the inner to the outer leaflet of the inner membrane. Transmembrane domains (TMD) form a pore in the inner membrane and the ATP-binding domain (NBD) is responsible for energy generation. The sequence is that of ATP-dependent lipid A-core flippase from Vibrio vulnificus (strain YJ016).